The following is a 276-amino-acid chain: Protein MGF 360-15R (276 aa).

Belongs to the asfivirus MGF 360 family.

Functionally, plays a role in virus cell tropism, and may be required for efficient virus replication in macrophages. The chain is Protein MGF 360-15R from African swine fever virus (isolate Warthog/Namibia/Wart80/1980) (ASFV).